The following is a 1054-amino-acid chain: Filament-like plant protein 6 (1054 aa).

3 coiled-coil regions span residues 64–139 (VQIK…VKQH), 174–200 (AEDRAAHLDGALKECMRQIRNLKKDHE), and 250–341 (SNML…RKKL). 2 disordered regions span residues 359 to 390 (RDSGDARQKRSPVKVSSPCKSPGGYSSTGSEF) and 448 to 506 (EAQL…KEKD). Composition is skewed to low complexity over residues 371-380 (VKVSSPCKSP), 450-461 (QLQQNNSQKSSL), and 470-494 (SNPSSSISVSEDGNDDSGSCSGSLS). Positions 389–463 (EFSLDNAQKF…NNSQKSSLEV (75 aa)) form a coiled coil. Coiled-coil stretches lie at residues 637–666 (QNLVEDCHLAEQKLQSIHQDLKNAVSRIHD) and 788–944 (ESDS…IFVL). Residues 951 to 1054 (FRPQPEQMRS…SRFFSSKSGY (104 aa)) form a disordered region. Residues 1007–1032 (PSDSETSDTTTSPSRVGSRLSRSGSS) show a composition bias toward low complexity.

It belongs to the FPP family. In terms of assembly, interacts with WPP/MAF proteins.

In Arabidopsis thaliana (Mouse-ear cress), this protein is Filament-like plant protein 6 (FPP6).